Consider the following 596-residue polypeptide: MRTCYTGQVCRDHLGQTVTLYGWVNRRRDHGGVIFIDLRDRTGLAQIVFDPDNAEAFGTAERLRNEFCISITGLVRLRPEGTANAELASGEVEVLCQQVEILNASVTPPFQLDDDNLSETTRLTHRVLDLRRPQMQHNLMLRYRVSIEVRKYLDQLGFIDIETPMLTKSTPEGARDYLVPSRVNAGYFFALPQSPQLFKQMLMVSGFDRYYQITKCFRDEDLRADRQPEFTQIDCETSFLNEVEIREIFEGMIRHVFKVVQDVDLPTPFPIMSWTEAMQRYGSDKPDLRVNLEFTDMTDVMRDVDFKVFASAATTAGSRVVALRVQGGGEMSRSEIDAYTQFVGIYGAKGLAYIKVNDVAKGREGLQSPIVKNLHDAALAELVKRTGAQNGDIIFFGADRAKVVNDAIGALRVKIGHSEFGKKAGLFSGGWKPLWVVDFPMFEYDEEENRYTAAHHPFTSPKDGHEDFLESDPGKAVAKAYDMVLNGWEIGGGSVRIHREEVQSKVFRALKIDAEEAREKFGFLLDALQYGAPPHGGIAFGLDRIITMMAGAESIRDVIAFPKTQRAQCLLTGAPSEVDEKQLRELHIRLRNVEVK.

Residue E172 participates in L-aspartate binding. The interval 196 to 199 is aspartate; it reads QLFK. Position 218 (R218) interacts with L-aspartate. Residues 218–220 and Q227 each bind ATP; that span reads RDE. H455 lines the L-aspartate pocket. E489 provides a ligand contact to ATP. Residue R496 participates in L-aspartate binding. Residue 541–544 participates in ATP binding; it reads GLDR.

The protein belongs to the class-II aminoacyl-tRNA synthetase family. Type 1 subfamily. Homodimer.

It is found in the cytoplasm. The catalysed reaction is tRNA(Asx) + L-aspartate + ATP = L-aspartyl-tRNA(Asx) + AMP + diphosphate. Aspartyl-tRNA synthetase with relaxed tRNA specificity since it is able to aspartylate not only its cognate tRNA(Asp) but also tRNA(Asn). Reaction proceeds in two steps: L-aspartate is first activated by ATP to form Asp-AMP and then transferred to the acceptor end of tRNA(Asp/Asn). This Bordetella bronchiseptica (strain ATCC BAA-588 / NCTC 13252 / RB50) (Alcaligenes bronchisepticus) protein is Aspartate--tRNA(Asp/Asn) ligase.